A 500-amino-acid chain; its full sequence is MNKEILAVVEAVSNEKALPREKIFEALESALATATKKKYEQEIDVRVEIDRKSGDFDTFRRWLIVEEVTMPTKEITLEAARFEDESLNVGDYVEDQIESVTFDRITTQTAKQVIVQKVREAERAMVVDQFRDQEGEIVTGVVKKVNRDNISLEIKSEGMAGNAEAVILREDMLPRENFRPGDRIRGVLYAVRPEARGAQLFVTRSKPEMLIELFRIEVPEIGEEVIEIKAAARDPGSRAKIAVKTNDKRIDPVGACVGMRGARVQAVSTELGGERIDIVLWDDNPAQFVINAMAPADVASIVVDEDKHTMDIAVEAGNLAQAIGRNGQNVRLASQLSGWELNVMTVDDLQAKHQAEAHAAIEIFTKYLDIDEEFATVLVEEGFSTLEELAYVPMKELLEIDGLDEPTVEALRERAKNALATLAQDQEASLGDNKPADDLLNLEGLDRDMAFKLAARGVCTLEDLADQGIDDLADIEGLTDEKAGELIMAARNICWFGDEA.

The S1 motif domain occupies 135 to 205; sequence GEIVTGVVKK…RGAQLFVTRS (71 aa). The KH domain occupies 307-373; sequence KHTMDIAVEA…FTKYLDIDEE (67 aa). A run of 2 repeats spans residues 369–419 and 444–494. A 2 X 51 AA approximate repeats region spans residues 369 to 494; sequence DIDEEFATVL…ELIMAARNIC (126 aa).

It belongs to the NusA family. Monomer. Binds directly to the core enzyme of the DNA-dependent RNA polymerase and to nascent RNA.

It is found in the cytoplasm. Participates in both transcription termination and antitermination. The chain is Transcription termination/antitermination protein NusA from Salmonella typhimurium (strain LT2 / SGSC1412 / ATCC 700720).